Here is a 57-residue protein sequence, read N- to C-terminus: Large ribosomal subunit protein bL32 (57 aa).

Basic residues predominate over residues 1–22 (MAVPKKKTSKAKRDQRRAHWRR). Positions 1 to 35 (MAVPKKKTSKAKRDQRRAHWRRQASSQAQKALSLG) are disordered.

This sequence belongs to the bacterial ribosomal protein bL32 family.

The polypeptide is Large ribosomal subunit protein bL32 (rpmF) (Synechocystis sp. (strain ATCC 27184 / PCC 6803 / Kazusa)).